Consider the following 359-residue polypeptide: Fructose-bisphosphate aldolase (359 aa).

Ser62 provides a ligand contact to D-glyceraldehyde 3-phosphate. Asp110 (proton donor) is an active-site residue. The Zn(2+) site is built by His111, Asp145, Glu175, and His227. Gly228 is a binding site for dihydroxyacetone phosphate. Zn(2+) is bound at residue His265. Residues 266–268 and 287–290 each bind dihydroxyacetone phosphate; these read GGS and NIDT.

This sequence belongs to the class II fructose-bisphosphate aldolase family. Homodimer. It depends on Zn(2+) as a cofactor.

It carries out the reaction beta-D-fructose 1,6-bisphosphate = D-glyceraldehyde 3-phosphate + dihydroxyacetone phosphate. It functions in the pathway carbohydrate degradation; glycolysis; D-glyceraldehyde 3-phosphate and glycerone phosphate from D-glucose: step 4/4. Functionally, catalyzes the aldol condensation of dihydroxyacetone phosphate (DHAP or glycerone-phosphate) with glyceraldehyde 3-phosphate (G3P) to form fructose 1,6-bisphosphate (FBP) in gluconeogenesis and the reverse reaction in glycolysis. The chain is Fructose-bisphosphate aldolase (fba) from Haemophilus influenzae (strain ATCC 51907 / DSM 11121 / KW20 / Rd).